Here is a 551-residue protein sequence, read N- to C-terminus: Putative BTB/POZ domain-containing protein L76 (551 aa).

The region spanning 19 to 90 is the BTB domain; it reads TDIILEIEDD…FYGQENDVID (72 aa).

This sequence belongs to the mimivirus BTB/WD family.

This Acanthamoeba polyphaga (Amoeba) protein is Putative BTB/POZ domain-containing protein L76.